The following is a 637-amino-acid chain: Probable membrane transporter protein MamO (637 aa).

Residues 1–24 are Cytoplasmic-facing; that stretch reads MIEVGETMGELPTNKIVFCERSWK. The chain crosses the membrane as a helical span at residues 25–45; sequence TPVSILAFLIFVTFAWGIYLL. The Lumenal segment spans residues 46–352; it reads DHYDEDDNFH…AKIGGYSVAD (307 aa). A protease-like region spans residues 78–268; the sequence is LYHTVPPAVV…VIVSHLQDVV (191 aa). Residues His148 and His263 each contribute to the a divalent metal cation site. A helical transmembrane segment spans residues 353-373; that stretch reads IVGLVMLALAAGVTGGMMTMG. The interval 370–637 is TSUP-like; sequence MTMGGGVLQV…AIALKMLTSV (268 aa). At 374–378 the chain is on the cytoplasmic side; that stretch reads GGVLQ. A helical membrane pass occupies residues 379–399; that stretch reads VAGMMVFFGYGMYLIRPVVFL. Residues 400 to 416 are Lumenal-facing; that stretch reads TNVVVYGAASLRNDKAQ. Residues 417–437 form a helical membrane-spanning segment; that stretch reads LVQWDKVKPLIPWGIAGVILG. Position 438 (Tyr438) is a topological domain, cytoplasmic. A helical transmembrane segment spans residues 439–459; that stretch reads FIGNAIGDSVVGILLGLFALI. Residues 460–517 are Lumenal-facing; the sequence is MAGKAVMEILQPNAGEETAESISATEAEDEMDELMALADGTSRPKASGLALPEGHARS. A helical membrane pass occupies residues 518–538; it reads AVLGLPMGLFSGILGISGGVI. Topologically, residues 539-554 are cytoplasmic; the sequence is EVPLQRYVGRISLQNA. A helical transmembrane segment spans residues 555-575; the sequence is IANSSVLVFWASVAGSVVAFL. Residues 576–586 lie on the Lumenal side of the membrane; sequence HGSSTGLIHWE. The chain crosses the membrane as a helical span at residues 587–607; sequence APVTLALVMIPGAYVGGIIGA. Topologically, residues 608–616 are cytoplasmic; that stretch reads RLMRVLPVR. A helical membrane pass occupies residues 617–637; sequence VLKGVYAATMAAIALKMLTSV.

In the N-terminal section; belongs to the peptidase S1C family. It in the C-terminal section; belongs to the 4-toluene sulfonate uptake permease (TSUP) (TC 2.A.102) family. The cofactor is a metal cation. In terms of processing, subject to proteolytic cleavage by MamE.

The protein resides in the magnetosome membrane. Functionally, plays 2 roles; promotes magnetite nucleation/formation and activates the MamE protease. Despite its near conservation of a protease-like sequence, this is probably not a protease. Required in conjunction with MamP for proteolysis of at least MamE, itself and MamP. May transport a solute that controls MamE's protease activity. May place individual iron atoms into the magnetite lattice. This Paramagnetospirillum magneticum (strain ATCC 700264 / AMB-1) (Magnetospirillum magneticum) protein is Probable membrane transporter protein MamO (mamO).